Here is a 190-residue protein sequence, read N- to C-terminus: Heme-binding protein 1 (190 aa).

Belongs to the HEBP family. Monomer.

The protein localises to the cytoplasm. In terms of biological role, may bind free porphyrinogens that may be present in the cell and thus facilitate removal of these potentially toxic compound. Binds with a high affinity to one molecule of heme or porphyrins. It binds metalloporphyrins, free porphyrins and N-methylprotoporphyrin with similar affinities. The protein is Heme-binding protein 1 (hebp1) of Xenopus laevis (African clawed frog).